We begin with the raw amino-acid sequence, 892 residues long: Smad protein daf-3 (892 aa).

Disordered stretches follow at residues 1 to 43 and 135 to 161; these read MGDH…GLED and PYLD…FDTK. The span at 15-26 shows a compositional bias: polar residues; sequence IPPQFNYSQPGT. An MH1 domain is found at 198 to 347; it reads KIVEYLMYYR…YEIVIGTMIV (150 aa). Residues 505 to 552 are disordered; the sequence is YPDFHHPFNQQPHQPPQLSQNHTSQQGSHQPGHQGQVPNDPPISRPVL. Residues 528-540 show a composition bias toward low complexity; the sequence is SQQGSHQPGHQGQ. An MH2 domain is found at 657-880; sequence WGTIVYYEKN…TNCFEPLGME (224 aa).

The protein belongs to the dwarfin/SMAD family. In terms of assembly, interacts with R-SMADs daf-8 and daf-14. Interacts with daf-14 in a daf-8 dependent manner. May interact with daf-5.

It is found in the cytoplasm. Its subcellular location is the nucleus. It localises to the chromosome. Functionally, transcriptional regulator and common SMAD (co-SMAD), required to regulate entry into a developmentally arrested larval state known as dauer, in response to harsh environmental conditions. Probable component of transcriptional regulatory complex with SMAD protein daf-5. Acts antagonistically to SMAD signaling downstream of TGF-beta-like daf-7 signaling. Binds to the 5'-GTCTG-3' motif found in regulatory regions and may modulate the expression of genes involved in TGF-beta-like daf-7 and Notch lag-2 signaling. May regulate gene expression outside the dauer pathway. The polypeptide is Smad protein daf-3 (Caenorhabditis elegans).